The chain runs to 240 residues: Protein GrpE (240 aa).

Disordered stretches follow at residues 1-54 (MSGD…NEAR) and 206-240 (VSMG…DGNG). Positions 215–233 (GASSQPAEAPAADAPAEDS) are enriched in low complexity.

It belongs to the GrpE family. In terms of assembly, homodimer.

The protein resides in the cytoplasm. Participates actively in the response to hyperosmotic and heat shock by preventing the aggregation of stress-denatured proteins, in association with DnaK and GrpE. It is the nucleotide exchange factor for DnaK and may function as a thermosensor. Unfolded proteins bind initially to DnaJ; upon interaction with the DnaJ-bound protein, DnaK hydrolyzes its bound ATP, resulting in the formation of a stable complex. GrpE releases ADP from DnaK; ATP binding to DnaK triggers the release of the substrate protein, thus completing the reaction cycle. Several rounds of ATP-dependent interactions between DnaJ, DnaK and GrpE are required for fully efficient folding. This is Protein GrpE from Synechococcus sp. (strain WH7803).